Consider the following 462-residue polypeptide: Toxin CqTX-A (462 aa).

The N-terminal stretch at 1–19 is a signal peptide; it reads MANMLYFSLLALLFMTGIA. An N-linked (GlcNAc...) asparagine glycan is attached at Asn174.

Belongs to the jellyfish toxin family. Type I subfamily. Post-translationally, contains disulfide bonds. N-glycosylated.

Its subcellular location is the secreted. The protein resides in the nematocyst. It localises to the target cell membrane. Its function is as follows. Critical allergen and main toxic protein of C.quadrigatus venom. Has potent hemolytic activity. Is lethal to crayfish. Causes cutaneous inflammation in humans. May act as a pore-forming toxin, disrupting normal transmembrane ion concentration gradients in susceptible cells. The protein is Toxin CqTX-A of Chiropsoides quadrigatus (Box jellyfish).